A 196-amino-acid chain; its full sequence is uncharacterized protein (196 aa).

This is an uncharacterized protein from Caenorhabditis elegans.